Consider the following 123-residue polypeptide: Ribonuclease P protein component 2 (123 aa).

The protein belongs to the eukaryotic/archaeal RNase P protein component 2 family. As to quaternary structure, consists of a catalytic RNA component and at least 4 protein subunits.

It carries out the reaction Endonucleolytic cleavage of RNA, removing 5'-extranucleotides from tRNA precursor.. Its function is as follows. Part of ribonuclease P, a protein complex that generates mature tRNA molecules by cleaving their 5'-ends. The sequence is that of Ribonuclease P protein component 2 from Aeropyrum pernix (strain ATCC 700893 / DSM 11879 / JCM 9820 / NBRC 100138 / K1).